The chain runs to 171 residues: 3-hydroxydecanoyl-[acyl-carrier-protein] dehydratase (171 aa).

The active site involves His70.

This sequence belongs to the thioester dehydratase family. FabA subfamily. Homodimer.

It is found in the cytoplasm. It carries out the reaction a (3R)-hydroxyacyl-[ACP] = a (2E)-enoyl-[ACP] + H2O. The enzyme catalyses (3R)-hydroxydecanoyl-[ACP] = (2E)-decenoyl-[ACP] + H2O. The catalysed reaction is (2E)-decenoyl-[ACP] = (3Z)-decenoyl-[ACP]. Its pathway is lipid metabolism; fatty acid biosynthesis. Its function is as follows. Necessary for the introduction of cis unsaturation into fatty acids. Catalyzes the dehydration of (3R)-3-hydroxydecanoyl-ACP to E-(2)-decenoyl-ACP and then its isomerization to Z-(3)-decenoyl-ACP. Can catalyze the dehydratase reaction for beta-hydroxyacyl-ACPs with saturated chain lengths up to 16:0, being most active on intermediate chain length. This is 3-hydroxydecanoyl-[acyl-carrier-protein] dehydratase from Shewanella sediminis (strain HAW-EB3).